We begin with the raw amino-acid sequence, 389 residues long: Large ribosomal subunit protein uL3 (389 aa).

Residues methionine 1–aspartate 36 are disordered. Positions proline 18–serine 31 are enriched in basic residues.

The protein belongs to the universal ribosomal protein uL3 family.

Its subcellular location is the cytoplasm. Functionally, the L3 protein is a component of the large subunit of cytoplasmic ribosomes. The protein is Large ribosomal subunit protein uL3 (RPL3) of Oryza sativa subsp. japonica (Rice).